The chain runs to 740 residues: ATP-dependent RNA helicase DDX1 (740 aa).

The interval 1–295 (MAAFSEMGVM…APKALIVEPS (295 aa)) is necessary for interaction with HNRNPK. The interval 1-448 (MAAFSEMGVM…DTVHHVVVPV (448 aa)) is interaction with dsRNA. The segment at 1 to 525 (MAAFSEMGVM…KIDCDNLEQY (525 aa)) is necessary for interaction with RELA. The 427-residue stretch at 2 to 428 (AAFSEMGVMP…SEKIMHFPTW (427 aa)) folds into the Helicase ATP-binding domain. 46-53 (AETGSGKT) lines the ATP pocket. The region spanning 70-247 (DQQEGKKGKT…LKFNFGEEEF (178 aa)) is the B30.2/SPRY domain. Residues lysine 239 and lysine 268 each carry the N6-acetyllysine modification. Lysine 281 carries the N6-acetyllysine; alternate modification. Lysine 281 is covalently cross-linked (Glycyl lysine isopeptide (Lys-Gly) (interchain with G-Cter in SUMO2); alternate). Positions 370-373 (DEAD) match the DEAD box motif. Serine 481 carries the phosphoserine modification. The 189-residue stretch at 493-681 (KGEYAVRAIK…QVEPDIKVPV (189 aa)) folds into the Helicase C-terminal domain. The tract at residues 525-740 (YFMQQGGGPD…YLPNQLFRTF (216 aa)) is necessary for interaction with HNRNPK.

Belongs to the DEAD box helicase family. DDX1 subfamily. Found in a multi-helicase-TICAM1 complex at least composed of DHX36, DDX1, DDX21 and TICAM1; this complex exists in resting cells with or without poly(I:C) RNA ligand stimulation. Interacts with DHX36. Interacts (via B30.2/SPRY domain) with DDX21 (via N-terminus); this interaction serves as bridges to TICAM1. Interacts with FAM98A (via N- and C-terminus). Interacts with MBNL1. Interacts with CSTF2. Interacts with HNRNPK. Interacts with ATM. Interacts with RELA (via C-terminus). Component of the tRNA-splicing ligase complex. Interacts with PHF5A (via C-terminus). Interacts with PQBP1. Interacts with ERCC6. Post-translationally, phosphorylated by ATM kinase; phosphorylation is increased in response to ionizing radiation (IR). As to expression, testis-specific. Expressed in the germ line stem cells, spermatogonia and spermatocytes of the testis. Also expressed in the seminoma and nonseminoma types of testicular germ cell tumors (TGCTs) (at protein level).

It is found in the nucleus. Its subcellular location is the cytoplasm. The protein resides in the cytosol. The protein localises to the cytoplasmic granule. It localises to the mitochondrion. The enzyme catalyses ATP + H2O = ADP + phosphate + H(+). Its function is as follows. Acts as an ATP-dependent RNA helicase, able to unwind both RNA-RNA and RNA-DNA duplexes. Possesses 5' single-stranded RNA overhang nuclease activity. Possesses ATPase activity on various RNA, but not DNA polynucleotides. May play a role in RNA clearance at DNA double-strand breaks (DSBs), thereby facilitating the template-guided repair of transcriptionally active regions of the genome. Together with RELA, acts as a coactivator to enhance NF-kappa-B-mediated transcriptional activation. Acts as a positive transcriptional regulator of cyclin CCND2 expression. Binds to the cyclin CCND2 promoter region. Associates with chromatin at the NF-kappa-B promoter region via association with RELA. Binds to poly(A) RNA. May be involved in 3'-end cleavage and polyadenylation of pre-mRNAs. Component of the tRNA-splicing ligase complex required to facilitate the enzymatic turnover of catalytic subunit RTCB: together with archease (ZBTB8OS), acts by facilitating the guanylylation of RTCB, a key intermediate step in tRNA ligation. Component of a multi-helicase-TICAM1 complex that acts as a cytoplasmic sensor of viral double-stranded RNA (dsRNA) and plays a role in the activation of a cascade of antiviral responses including the induction of pro-inflammatory cytokines via the adapter molecule TICAM1. Specifically binds (via helicase ATP-binding domain) on both short and long poly(I:C) dsRNA. The sequence is that of ATP-dependent RNA helicase DDX1 (Ddx1) from Mus musculus (Mouse).